An 87-amino-acid chain; its full sequence is uncharacterized protein (87 aa).

A helical membrane pass occupies residues 21 to 41 (LSSSLYSVAFFLFFFPNFLFF).

The protein resides in the membrane. This is an uncharacterized protein from Saccharomyces cerevisiae (strain ATCC 204508 / S288c) (Baker's yeast).